We begin with the raw amino-acid sequence, 353 residues long: Mitochondrial distribution and morphology protein 10 (353 aa).

It belongs to the MDM10 family. Component of the ER-mitochondria encounter structure (ERMES) or MDM complex, composed of MMM1, MDM10, MDM12 and MDM34. Associates with the mitochondrial outer membrane sorting assembly machinery SAM(core) complex.

The protein localises to the mitochondrion outer membrane. Functionally, component of the ERMES/MDM complex, which serves as a molecular tether to connect the endoplasmic reticulum and mitochondria. Components of this complex are involved in the control of mitochondrial shape and protein biogenesis and may function in phospholipid exchange. MDM10 is involved in the late assembly steps of the general translocase of the mitochondrial outer membrane (TOM complex). Functions in the TOM40-specific route of the assembly of outer membrane beta-barrel proteins, including the association of TOM40 with the receptor TOM22 and small TOM proteins. Can associate with the SAM(core) complex as well as the MDM12-MMM1 complex, both involved in late steps of the major beta-barrel assembly pathway, that is responsible for biogenesis of all outer membrane beta-barrel proteins. May act as a switch that shuttles between both complexes and channels precursor proteins into the TOM40-specific pathway. Plays a role in mitochondrial morphology and in the inheritance of mitochondria. This chain is Mitochondrial distribution and morphology protein 10, found in Yarrowia lipolytica (strain CLIB 122 / E 150) (Yeast).